Consider the following 234-residue polypeptide: MKITWLGHSAFRIETSKAKILLDPFLSYNASFSGQDIKDVSAGITHILLTHGHGDHVGDTVALAKETGAVVLANADLAAWLGSKGVDKIEMGNTGGTIALGSFSATFTNALHSSAQITEDGVSHALGNANGLMLHFDDEASILAMGDTDIFSDMALINELHQPDIGFVPVGDRFTMGGAVAALACRRYFNFKTAIPCHYGTFPIIDQTAEKFVAGMDGSKTDVKAIRPSESLSI.

It belongs to the UPF0173 family.

This Rhizobium johnstonii (strain DSM 114642 / LMG 32736 / 3841) (Rhizobium leguminosarum bv. viciae) protein is UPF0173 metal-dependent hydrolase RL2074.